The chain runs to 291 residues: Probable endonuclease 4 (291 aa).

Zn(2+) is bound by residues histidine 72, histidine 112, glutamate 147, aspartate 181, histidine 184, histidine 215, aspartate 228, histidine 230, and glutamate 260.

Belongs to the AP endonuclease 2 family. The cofactor is Zn(2+).

The enzyme catalyses Endonucleolytic cleavage to 5'-phosphooligonucleotide end-products.. Functionally, endonuclease IV plays a role in DNA repair. It cleaves phosphodiester bonds at apurinic or apyrimidinic (AP) sites, generating a 3'-hydroxyl group and a 5'-terminal sugar phosphate. The polypeptide is Probable endonuclease 4 (Mycoplasma genitalium (strain ATCC 33530 / DSM 19775 / NCTC 10195 / G37) (Mycoplasmoides genitalium)).